The chain runs to 308 residues: Taste receptor type 2 member 41 (308 aa).

The Extracellular segment spans residues 1 to 7; that stretch reads MLPTLSV. A helical membrane pass occupies residues 8 to 28; sequence FFMLTFVLLCFLGILANGFIV. Over 29-60 the chain is Cytoplasmic; sequence LMLSREWLLRGRLLPSDMILFSLGTSRFFQQC. A helical transmembrane segment spans residues 61 to 81; sequence VGLVNSFYYFLHLVEYSGSLA. Residues 82–88 lie on the Extracellular side of the membrane; the sequence is RQLISLH. The chain crosses the membrane as a helical span at residues 89 to 109; sequence WDFLNSATFWFCTWLSVLFCI. Over 110–128 the chain is Cytoplasmic; sequence KIANFSHPAFLWLKWRFPA. A helical membrane pass occupies residues 129-149; it reads LVPWFLLGSILVSVIVTLLFF. Residues 150–186 lie on the Extracellular side of the membrane; the sequence is WGNHTIYQAFLRRKFTGNTTFKEWNRRLEIDYFMPLK. Residues Asn152 and Asn167 are each glycosylated (N-linked (GlcNAc...) asparagine). Residues 187–207 form a helical membrane-spanning segment; that stretch reads VVTMSIPCSLFLVSILLLISS. Topologically, residues 208 to 239 are cytoplasmic; the sequence is LRRHSLRMQHNTHSLQDPNVQAHSRALKSLIS. A helical transmembrane segment spans residues 240-260; that stretch reads FLVLYAVSFVSMIIDATVFIS. Topologically, residues 261-264 are extracellular; that stretch reads SDNV. A helical transmembrane segment spans residues 265–285; sequence WYWPWQIILYFCMSVHPFILI. The Cytoplasmic portion of the chain corresponds to 286–308; that stretch reads TNNLRFRGTFRQLLLLARGFWVA.

The protein belongs to the G-protein coupled receptor T2R family. In terms of tissue distribution, expressed in subsets of taste receptor cells of the tongue and palate epithelium and exclusively in gustducin-positive cells.

Its subcellular location is the membrane. Receptor that may play a role in the perception of bitterness and is gustducin-linked. May play a role in sensing the chemical composition of the gastrointestinal content. The activity of this receptor may stimulate alpha gustducin, mediate PLC-beta-2 activation and lead to the gating of TRPM5. This Mus musculus (Mouse) protein is Taste receptor type 2 member 41 (Tas2r41).